The following is a 1282-amino-acid chain: ATP-dependent helicase/nuclease subunit A (1282 aa).

In terms of domain architecture, UvrD-like helicase ATP-binding spans 10–481 (SKWTDSQRQV…IELQENFRSS (472 aa)). Residue 31–38 (AGAGAGKT) coordinates ATP. Residues 516–820 (KPRELYLNED…RLMSIHKSKG (305 aa)) form the UvrD-like helicase C-terminal domain.

It belongs to the helicase family. AddA subfamily. Heterodimer of AddA and AddB/RexB. Requires Mg(2+) as cofactor.

The catalysed reaction is Couples ATP hydrolysis with the unwinding of duplex DNA by translocating in the 3'-5' direction.. It catalyses the reaction ATP + H2O = ADP + phosphate + H(+). Its function is as follows. The heterodimer acts as both an ATP-dependent DNA helicase and an ATP-dependent, dual-direction single-stranded exonuclease. Recognizes the chi site generating a DNA molecule suitable for the initiation of homologous recombination. The AddA nuclease domain is required for chi fragment generation; this subunit has the helicase and 3' -&gt; 5' nuclease activities. This is ATP-dependent helicase/nuclease subunit A from Natranaerobius thermophilus (strain ATCC BAA-1301 / DSM 18059 / JW/NM-WN-LF).